A 99-amino-acid chain; its full sequence is Ubiquitin-related modifier 1 (99 aa).

Gly-99 carries the 1-thioglycine modification. Gly-99 is covalently cross-linked (Glycyl lysine isopeptide (Gly-Lys) (interchain with K-? in acceptor proteins)).

The protein belongs to the URM1 family. Post-translationally, C-terminal thiocarboxylation occurs in 2 steps, it is first acyl-adenylated (-COAMP) via the hesA/moeB/thiF part of UBA4, then thiocarboxylated (-COSH) via the rhodanese domain of UBA4.

The protein resides in the cytoplasm. It participates in tRNA modification; 5-methoxycarbonylmethyl-2-thiouridine-tRNA biosynthesis. Its function is as follows. Acts as a sulfur carrier required for 2-thiolation of mcm(5)S(2)U at tRNA wobble positions of cytosolic tRNA(Lys), tRNA(Glu) and tRNA(Gln). Serves as sulfur donor in tRNA 2-thiolation reaction by being thiocarboxylated (-COSH) at its C-terminus by the MOCS3 homolog UBA4. The sulfur is then transferred to tRNA to form 2-thiolation of mcm(5)S(2)U. Prior mcm(5) tRNA modification by the elongator complex is required for 2-thiolation. Also acts as a ubiquitin-like protein (UBL) that is covalently conjugated via an isopeptide bond to lysine residues of target proteins such as AHP1. The thiocarboxylated form serves as substrate for conjugation and oxidative stress specifically induces the formation of UBL-protein conjugates. The chain is Ubiquitin-related modifier 1 from Yarrowia lipolytica (strain CLIB 122 / E 150) (Yeast).